The following is a 546-amino-acid chain: 2-isopropylmalate synthase (546 aa).

In terms of domain architecture, Pyruvate carboxyltransferase spans 5–274 (ITIFDTTLRD…TADVHTEHLT (270 aa)). Residues Asp14, His209, His211, and Asn245 each contribute to the Mn(2+) site. A regulatory domain region spans residues 415–546 (RLDQFSVHLS…QNGIMHTYGE (132 aa)).

Belongs to the alpha-IPM synthase/homocitrate synthase family. LeuA type 1 subfamily. Homodimer. Requires Mn(2+) as cofactor.

The protein localises to the cytoplasm. The enzyme catalyses 3-methyl-2-oxobutanoate + acetyl-CoA + H2O = (2S)-2-isopropylmalate + CoA + H(+). It functions in the pathway amino-acid biosynthesis; L-leucine biosynthesis; L-leucine from 3-methyl-2-oxobutanoate: step 1/4. Functionally, catalyzes the condensation of the acetyl group of acetyl-CoA with 3-methyl-2-oxobutanoate (2-ketoisovalerate) to form 3-carboxy-3-hydroxy-4-methylpentanoate (2-isopropylmalate). The protein is 2-isopropylmalate synthase of Salinibacter ruber (strain M8).